A 261-amino-acid chain; its full sequence is Cytochrome c oxidase subunit 3 (261 aa).

Topologically, residues 1-15 (MTHQTHAYHMVNPSP) are mitochondrial matrix. A helical transmembrane segment spans residues 16–34 (WPLTGALSALLMTSGLTMW). The Mitochondrial intermembrane portion of the chain corresponds to 35–40 (FHFNSM). The helical transmembrane segment at 41–66 (TLLTLGLTTNMLTMYQWWRDIIREST) threads the bilayer. Topologically, residues 67–72 (FQGHHT) are mitochondrial matrix. Residues 73–105 (PNVQKGLRYGMILFIISEVLFFTGFFWAFYHSS) traverse the membrane as a helical segment. Residues 106–128 (LAPTPELGGCWPPTGIHPLNPLE) are Mitochondrial intermembrane-facing. The chain crosses the membrane as a helical span at residues 129–152 (VPLLNTSVLLASGVSITWAHHSLM). At 153 to 155 (EGN) the chain is on the mitochondrial matrix side. The chain crosses the membrane as a helical span at residues 156–183 (RNHMLQALFITISLGVYFTLLQASEYYE). Residues 184-190 (APFTISD) lie on the Mitochondrial intermembrane side of the membrane. Residues 191 to 223 (GVYGSTFFVATGFHGLHVIIGSTFLIVCFFRQL) form a helical membrane-spanning segment. Residues 224–232 (KFHFTSNHH) are Mitochondrial matrix-facing. The helical transmembrane segment at 233 to 256 (FGFEAAAWYWHFVDVVWLFLYVSI) threads the bilayer. Topologically, residues 257 to 261 (YWWGS) are mitochondrial intermembrane.

This sequence belongs to the cytochrome c oxidase subunit 3 family. In terms of assembly, component of the cytochrome c oxidase (complex IV, CIV), a multisubunit enzyme composed of 14 subunits. The complex is composed of a catalytic core of 3 subunits MT-CO1, MT-CO2 and MT-CO3, encoded in the mitochondrial DNA, and 11 supernumerary subunits COX4I, COX5A, COX5B, COX6A, COX6B, COX6C, COX7A, COX7B, COX7C, COX8 and NDUFA4, which are encoded in the nuclear genome. The complex exists as a monomer or a dimer and forms supercomplexes (SCs) in the inner mitochondrial membrane with NADH-ubiquinone oxidoreductase (complex I, CI) and ubiquinol-cytochrome c oxidoreductase (cytochrome b-c1 complex, complex III, CIII), resulting in different assemblies (supercomplex SCI(1)III(2)IV(1) and megacomplex MCI(2)III(2)IV(2)).

The protein localises to the mitochondrion inner membrane. The enzyme catalyses 4 Fe(II)-[cytochrome c] + O2 + 8 H(+)(in) = 4 Fe(III)-[cytochrome c] + 2 H2O + 4 H(+)(out). Component of the cytochrome c oxidase, the last enzyme in the mitochondrial electron transport chain which drives oxidative phosphorylation. The respiratory chain contains 3 multisubunit complexes succinate dehydrogenase (complex II, CII), ubiquinol-cytochrome c oxidoreductase (cytochrome b-c1 complex, complex III, CIII) and cytochrome c oxidase (complex IV, CIV), that cooperate to transfer electrons derived from NADH and succinate to molecular oxygen, creating an electrochemical gradient over the inner membrane that drives transmembrane transport and the ATP synthase. Cytochrome c oxidase is the component of the respiratory chain that catalyzes the reduction of oxygen to water. Electrons originating from reduced cytochrome c in the intermembrane space (IMS) are transferred via the dinuclear copper A center (CU(A)) of subunit 2 and heme A of subunit 1 to the active site in subunit 1, a binuclear center (BNC) formed by heme A3 and copper B (CU(B)). The BNC reduces molecular oxygen to 2 water molecules using 4 electrons from cytochrome c in the IMS and 4 protons from the mitochondrial matrix. The protein is Cytochrome c oxidase subunit 3 (MT-CO3) of Antidorcas marsupialis (Springbok).